The chain runs to 334 residues: 4-hydroxyproline 2-epimerase (334 aa).

Catalysis depends on Cys-91, which acts as the Proton acceptor. Residues 92–93 (GH), His-224, and Asp-250 each bind substrate. Catalysis depends on Cys-254, which acts as the Proton donor. Residue 255-256 (GT) coordinates substrate.

This sequence belongs to the proline racemase family.

It carries out the reaction trans-4-hydroxy-L-proline = cis-4-hydroxy-D-proline. In terms of biological role, catalyzes the epimerization of trans-4-hydroxy-L-proline (t4LHyp) to cis-4-hydroxy-D-proline (c4DHyp). Is likely involved in a degradation pathway that converts t4LHyp to alpha-ketoglutarate. Displays no proline racemase activity. The chain is 4-hydroxyproline 2-epimerase from Spirosoma linguale (strain ATCC 33905 / DSM 74 / LMG 10896 / Claus 1).